The sequence spans 212 residues: Thymidylate kinase (212 aa).

Position 11–18 (G11–S18) interacts with ATP.

The protein belongs to the thymidylate kinase family.

The enzyme catalyses dTMP + ATP = dTDP + ADP. Its function is as follows. Phosphorylation of dTMP to form dTDP in both de novo and salvage pathways of dTTP synthesis. This is Thymidylate kinase from Chromohalobacter salexigens (strain ATCC BAA-138 / DSM 3043 / CIP 106854 / NCIMB 13768 / 1H11).